A 49-amino-acid polypeptide reads, in one-letter code: Large ribosomal subunit protein bL33B (49 aa).

The protein belongs to the bacterial ribosomal protein bL33 family.

This is Large ribosomal subunit protein bL33B from Geobacillus thermodenitrificans (strain NG80-2).